The chain runs to 264 residues: S-adenosylmethionine decarboxylase proenzyme (264 aa).

Serine 112 functions as the Schiff-base intermediate with substrate; via pyruvic acid in the catalytic mechanism. Serine 112 carries the post-translational modification Pyruvic acid (Ser); by autocatalysis. Histidine 117 functions as the Proton acceptor; for processing activity in the catalytic mechanism. The Proton donor; for catalytic activity role is filled by cysteine 140.

It belongs to the prokaryotic AdoMetDC family. Type 2 subfamily. Heterooctamer of four alpha and four beta chains arranged as a tetramer of alpha/beta heterodimers. Pyruvate is required as a cofactor. Is synthesized initially as an inactive proenzyme. Formation of the active enzyme involves a self-maturation process in which the active site pyruvoyl group is generated from an internal serine residue via an autocatalytic post-translational modification. Two non-identical subunits are generated from the proenzyme in this reaction, and the pyruvate is formed at the N-terminus of the alpha chain, which is derived from the carboxyl end of the proenzyme. The post-translation cleavage follows an unusual pathway, termed non-hydrolytic serinolysis, in which the side chain hydroxyl group of the serine supplies its oxygen atom to form the C-terminus of the beta chain, while the remainder of the serine residue undergoes an oxidative deamination to produce ammonia and the pyruvoyl group blocking the N-terminus of the alpha chain.

The catalysed reaction is S-adenosyl-L-methionine + H(+) = S-adenosyl 3-(methylsulfanyl)propylamine + CO2. The protein operates within amine and polyamine biosynthesis; S-adenosylmethioninamine biosynthesis; S-adenosylmethioninamine from S-adenosyl-L-methionine: step 1/1. In terms of biological role, catalyzes the decarboxylation of S-adenosylmethionine to S-adenosylmethioninamine (dcAdoMet), the propylamine donor required for the synthesis of the polyamines spermine and spermidine from the diamine putrescine. The sequence is that of S-adenosylmethionine decarboxylase proenzyme from Salmonella agona (strain SL483).